Reading from the N-terminus, the 152-residue chain is MDYTISEFGKVFLFLLFGVVFVIGGYVSSRMLRPHRPNDEKLTSYECGEEAVGSAWVQFNIRFYVVALIFIIFDVEVLFLFPWATVFKQLGGFALFEAVIFVTILTLGLVYAWVKGDLDWVRPTPNVPKMPEKRFDNISSGRSQVVKEESVS.

Helical transmembrane passes span Phe-8–Ser-28, Phe-63–Trp-83, and Leu-90–Val-110.

It belongs to the complex I subunit 3 family. NDH-1 is composed of 14 different subunits. Subunits NuoA, H, J, K, L, M, N constitute the membrane sector of the complex.

It is found in the cell inner membrane. It catalyses the reaction a quinone + NADH + 5 H(+)(in) = a quinol + NAD(+) + 4 H(+)(out). In terms of biological role, NDH-1 shuttles electrons from NADH, via FMN and iron-sulfur (Fe-S) centers, to quinones in the respiratory chain. The immediate electron acceptor for the enzyme in this species is believed to be a menaquinone. Couples the redox reaction to proton translocation (for every two electrons transferred, four hydrogen ions are translocated across the cytoplasmic membrane), and thus conserves the redox energy in a proton gradient. In Chloroherpeton thalassium (strain ATCC 35110 / GB-78), this protein is NADH-quinone oxidoreductase subunit A 2.